Reading from the N-terminus, the 311-residue chain is Olfactory receptor 10G4 (311 aa).

Over 1–23 (MSNASLVTAFILTGLPHAPGLDA) the chain is Extracellular. N-linked (GlcNAc...) asparagine glycosylation is present at asparagine 3. Residues 24–44 (LLFGIFLVVYVLTVLGNLLIL) form a helical membrane-spanning segment. Over 45 to 52 (LVIRVDSH) the chain is Cytoplasmic. Residues 53–73 (LHTPMYYFLTNLSFIDMWFST) form a helical membrane-spanning segment. At 74–98 (VTVPKMLMTLVSPSGRAISFHSCVA) the chain is on the extracellular side. The cysteines at positions 96 and 188 are disulfide-linked. Residues 99-119 (QLYFFHFLGSTECFLYTVMSY) form a helical membrane-spanning segment. At 120-138 (DRYLAISYPLRYTSMMSGS) the chain is on the cytoplasmic side. The chain crosses the membrane as a helical span at residues 139–159 (RCALLATGTWLSGSLHSAVQT). The Extracellular portion of the chain corresponds to 160–196 (ILTFHLPYCGPNQIQHYFCDAPPILKLACADTSANVM). The helical transmembrane segment at 197–216 (VIFVDIGIVASGCFVLIVLS) threads the bilayer. At 217-236 (YVSIVCSILRIRTSDGRRRA) the chain is on the cytoplasmic side. The helical transmembrane segment at 237 to 257 (FQTCASHCIVVLCFFVPCVVI) threads the bilayer. Residues 258–268 (YLRPGSMDAMD) are Extracellular-facing. A helical transmembrane segment spans residues 269 to 289 (GVVAIFYTVLTPLLNPVVYTL). Residues 290-311 (RNKEVKKAVLKLRDKVAHPQRK) are Cytoplasmic-facing.

The protein belongs to the G-protein coupled receptor 1 family.

Its subcellular location is the cell membrane. Its function is as follows. Odorant receptor. The chain is Olfactory receptor 10G4 (OR10G4) from Homo sapiens (Human).